The primary structure comprises 361 residues: D-alanine--D-alanine ligase (361 aa).

Residues 139-336 (KLLLKEKEIS…FSQIIDNMIN (198 aa)) form the ATP-grasp domain. ATP is bound at residue 167-222 (EKNLGYPMIVKPARLGSSIGVSKVVDRKNFEEAVKNVLLFDNKVLVEKWINAREIN). Mg(2+) is bound by residues Asp296, Glu307, and Asn309.

The protein belongs to the D-alanine--D-alanine ligase family. Requires Mg(2+) as cofactor. Mn(2+) is required as a cofactor.

It is found in the cytoplasm. It catalyses the reaction 2 D-alanine + ATP = D-alanyl-D-alanine + ADP + phosphate + H(+). It participates in cell wall biogenesis; peptidoglycan biosynthesis. Cell wall formation. The polypeptide is D-alanine--D-alanine ligase (Thermosipho melanesiensis (strain DSM 12029 / CIP 104789 / BI429)).